The sequence spans 224 residues: MAAAVPQRAWTVEQLRSEQLPKKDIIKFLQDHGSDSFLAEHKLLGNIKNVAKTANKDHLVNAYNHLFESKRFKGTETISKVSEQVKNVKLSDDKPKDSKSEETLDEGPPKYTKSILKKGDKTNFPKKGDVVHCWYTGTLPDGTVFDTNIQTSSKKKKNAKPLSFKVGVGKVIRGWDEALLTMSKGEKARLEIEPEWAYGKKGQPDAKIPPNTKLIFEVELVDID.

Alanine 2 is modified (N-acetylalanine). Phosphoserine is present on serine 36. The segment at 88–118 is disordered; it reads VKLSDDKPKDSKSEETLDEGPPKYTKSILKK. Residues 89–102 are compositionally biased toward basic and acidic residues; that stretch reads KLSDDKPKDSKSEE. Lysine 99 bears the N6-acetyllysine mark. Positions 128–224 constitute a PPIase FKBP-type domain; that stretch reads GDVVHCWYTG…IFEVELVDID (97 aa). Residue serine 152 is modified to Phosphoserine. The residue at position 170 (lysine 170) is an N6-acetyllysine.

This sequence belongs to the FKBP-type PPIase family.

It localises to the nucleus. It catalyses the reaction [protein]-peptidylproline (omega=180) = [protein]-peptidylproline (omega=0). Its activity is regulated as follows. Inhibited preferentially by rapamycin over FK506. Its function is as follows. FK506- and rapamycin-binding proteins (FKBPs) constitute a family of receptors for the two immunosuppressants which inhibit T-cell proliferation by arresting two distinct cytoplasmic signal transmission pathways. PPIases accelerate the folding of proteins. This is Peptidyl-prolyl cis-trans isomerase FKBP3 (Fkbp3) from Mus musculus (Mouse).